Consider the following 780-residue polypeptide: Lon protease (780 aa).

One can recognise a Lon N-terminal domain in the interval 11–204; the sequence is IPVLPLRDVV…RLMAIMESEI (194 aa). ATP is bound at residue 356-363; the sequence is GPPGVGKT. Residues 592 to 773 form the Lon proteolytic domain; sequence KNQIGQVIGL…KEVLNLSLEN (182 aa). Residues Ser679 and Lys722 contribute to the active site.

This sequence belongs to the peptidase S16 family. Homohexamer. Organized in a ring with a central cavity.

The protein resides in the cytoplasm. The enzyme catalyses Hydrolysis of proteins in presence of ATP.. Its function is as follows. ATP-dependent serine protease that mediates the selective degradation of mutant and abnormal proteins as well as certain short-lived regulatory proteins. Required for cellular homeostasis and for survival from DNA damage and developmental changes induced by stress. Degrades polypeptides processively to yield small peptide fragments that are 5 to 10 amino acids long. Binds to DNA in a double-stranded, site-specific manner. This is Lon protease from Buchnera aphidicola subsp. Baizongia pistaciae (strain Bp).